A 145-amino-acid polypeptide reads, in one-letter code: Endoribonuclease YbeY (145 aa).

Zn(2+) contacts are provided by His-109, His-113, and His-119.

It belongs to the endoribonuclease YbeY family. Requires Zn(2+) as cofactor.

The protein localises to the cytoplasm. Single strand-specific metallo-endoribonuclease involved in late-stage 70S ribosome quality control and in maturation of the 3' terminus of the 16S rRNA. In Vesicomyosocius okutanii subsp. Calyptogena okutanii (strain HA), this protein is Endoribonuclease YbeY.